A 312-amino-acid polypeptide reads, in one-letter code: 4-hydroxy-3-methylbut-2-enyl diphosphate reductase (312 aa).

C15 is a binding site for [4Fe-4S] cluster. H44 and H77 together coordinate (2E)-4-hydroxy-3-methylbut-2-enyl diphosphate. Residues H44 and H77 each coordinate dimethylallyl diphosphate. Positions 44 and 77 each coordinate isopentenyl diphosphate. Position 99 (C99) interacts with [4Fe-4S] cluster. H127 lines the (2E)-4-hydroxy-3-methylbut-2-enyl diphosphate pocket. H127 provides a ligand contact to dimethylallyl diphosphate. H127 is an isopentenyl diphosphate binding site. Catalysis depends on E129, which acts as the Proton donor. Residue T167 coordinates (2E)-4-hydroxy-3-methylbut-2-enyl diphosphate. A [4Fe-4S] cluster-binding site is contributed by C197. (2E)-4-hydroxy-3-methylbut-2-enyl diphosphate is bound by residues S225, S226, N227, and S269. Residues S225, S226, N227, and S269 each contribute to the dimethylallyl diphosphate site. Residues S225, S226, N227, and S269 each coordinate isopentenyl diphosphate.

It belongs to the IspH family. It depends on [4Fe-4S] cluster as a cofactor.

It catalyses the reaction isopentenyl diphosphate + 2 oxidized [2Fe-2S]-[ferredoxin] + H2O = (2E)-4-hydroxy-3-methylbut-2-enyl diphosphate + 2 reduced [2Fe-2S]-[ferredoxin] + 2 H(+). It carries out the reaction dimethylallyl diphosphate + 2 oxidized [2Fe-2S]-[ferredoxin] + H2O = (2E)-4-hydroxy-3-methylbut-2-enyl diphosphate + 2 reduced [2Fe-2S]-[ferredoxin] + 2 H(+). Its pathway is isoprenoid biosynthesis; dimethylallyl diphosphate biosynthesis; dimethylallyl diphosphate from (2E)-4-hydroxy-3-methylbutenyl diphosphate: step 1/1. The protein operates within isoprenoid biosynthesis; isopentenyl diphosphate biosynthesis via DXP pathway; isopentenyl diphosphate from 1-deoxy-D-xylulose 5-phosphate: step 6/6. Catalyzes the conversion of 1-hydroxy-2-methyl-2-(E)-butenyl 4-diphosphate (HMBPP) into a mixture of isopentenyl diphosphate (IPP) and dimethylallyl diphosphate (DMAPP). Acts in the terminal step of the DOXP/MEP pathway for isoprenoid precursor biosynthesis. The protein is 4-hydroxy-3-methylbut-2-enyl diphosphate reductase of Azoarcus sp. (strain BH72).